Reading from the N-terminus, the 727-residue chain is Translation initiation factor IF-2, mitochondrial (727 aa).

Residues 1–29 (MNRKILKLENLLRFHTICRQLHSLCQRRM) constitute a mitochondrion transit peptide. A tr-type G domain is found at 178-348 (PRSPVVTIMG…IALAEMLELK (171 aa)). The tract at residues 187–194 (GHVDHGKT) is G1. 187-194 (GHVDHGKT) serves as a coordination point for GTP. The interval 212 to 216 (GITQH) is G2. Residues 234-237 (DTPG) and 288-291 (NKCD) contribute to the GTP site. The tract at residues 234–237 (DTPG) is G3. Residues 288-291 (NKCD) form a G4 region. The G5 stretch occupies residues 324–326 (SAL). Thr-688 carries the phosphothreonine modification.

Belongs to the TRAFAC class translation factor GTPase superfamily. Classic translation factor GTPase family. IF-2 subfamily. In terms of assembly, monomer.

It is found in the mitochondrion. Functionally, one of the essential components for the initiation of protein synthesis. Protects formylmethionyl-tRNA from spontaneous hydrolysis and promotes its binding to the 30S ribosomal subunits. Also involved in the hydrolysis of GTP during the formation of the 70S ribosomal complex. The polypeptide is Translation initiation factor IF-2, mitochondrial (MTIF2) (Bos taurus (Bovine)).